A 472-amino-acid chain; its full sequence is Probable glycine dehydrogenase (decarboxylating) subunit 2 (472 aa).

K268 carries the N6-(pyridoxal phosphate)lysine modification.

This sequence belongs to the GcvP family. C-terminal subunit subfamily. As to quaternary structure, the glycine cleavage system is composed of four proteins: P, T, L and H. In this organism, the P 'protein' is a heterodimer of two subunits. Pyridoxal 5'-phosphate serves as cofactor.

It catalyses the reaction N(6)-[(R)-lipoyl]-L-lysyl-[glycine-cleavage complex H protein] + glycine + H(+) = N(6)-[(R)-S(8)-aminomethyldihydrolipoyl]-L-lysyl-[glycine-cleavage complex H protein] + CO2. In terms of biological role, the glycine cleavage system catalyzes the degradation of glycine. The P protein binds the alpha-amino group of glycine through its pyridoxal phosphate cofactor; CO(2) is released and the remaining methylamine moiety is then transferred to the lipoamide cofactor of the H protein. In Thermoplasma acidophilum (strain ATCC 25905 / DSM 1728 / JCM 9062 / NBRC 15155 / AMRC-C165), this protein is Probable glycine dehydrogenase (decarboxylating) subunit 2.